A 57-amino-acid chain; its full sequence is Protein YnaL (57 aa).

The segment at 7–57 is disordered; sequence LQIPVPEPIPGDPVPVPDPIPRPQPMPDPPPDEEPIKLSHRERRSARIRAC. Residues 11-35 show a composition bias toward pro residues; sequence VPEPIPGDPVPVPDPIPRPQPMPDP. Over residues 46-57 the composition is skewed to basic residues; that stretch reads HRERRSARIRAC.

This chain is Protein YnaL, found in Escherichia coli (strain K12).